A 134-amino-acid polypeptide reads, in one-letter code: D-ribose pyranase (134 aa).

Histidine 20 (proton donor) is an active-site residue. Residues aspartate 28, histidine 99, and 123–125 (FSN) contribute to the substrate site.

The protein belongs to the RbsD / FucU family. RbsD subfamily. In terms of assembly, homodecamer.

Its subcellular location is the cytoplasm. It carries out the reaction beta-D-ribopyranose = beta-D-ribofuranose. It functions in the pathway carbohydrate metabolism; D-ribose degradation; D-ribose 5-phosphate from beta-D-ribopyranose: step 1/2. In terms of biological role, catalyzes the interconversion of beta-pyran and beta-furan forms of D-ribose. This chain is D-ribose pyranase, found in Staphylococcus carnosus (strain TM300).